The chain runs to 725 residues: Heme/hemopexin utilization protein C (725 aa).

The first 21 residues, 1–21 (MRFSKLSLAIATTLVTANALA), serve as a signal peptide directing secretion. The TBDR plug domain occupies 36 to 147 (DPSRFAYTPE…LGGVVAMRTP (112 aa)). The 568-residue stretch at 158-725 (KFGVKIRQGY…NAKISAVYSF (568 aa)) folds into the TBDR beta-barrel domain. Residues 708 to 725 (SLMEGTGRNAKISAVYSF) carry the TonB C-terminal box motif.

It belongs to the TonB-dependent receptor family.

It is found in the cell outer membrane. Functionally, required for utilization of free heme at low concentrations. This chain is Heme/hemopexin utilization protein C (hxuC), found in Haemophilus influenzae.